The primary structure comprises 138 residues: Putative pre-16S rRNA nuclease (138 aa).

Belongs to the YqgF nuclease family.

Its subcellular location is the cytoplasm. In terms of biological role, could be a nuclease involved in processing of the 5'-end of pre-16S rRNA. This Escherichia coli O45:K1 (strain S88 / ExPEC) protein is Putative pre-16S rRNA nuclease.